The sequence spans 281 residues: Bis(5'-nucleosyl)-tetraphosphatase, symmetrical (281 aa).

This sequence belongs to the Ap4A hydrolase family.

It carries out the reaction P(1),P(4)-bis(5'-adenosyl) tetraphosphate + H2O = 2 ADP + 2 H(+). Functionally, hydrolyzes diadenosine 5',5'''-P1,P4-tetraphosphate to yield ADP. The sequence is that of Bis(5'-nucleosyl)-tetraphosphatase, symmetrical from Pectobacterium carotovorum subsp. carotovorum (strain PC1).